The chain runs to 722 residues: Transmembrane channel-like protein 8 (722 aa).

Residues methionine 1–alanine 21 are disordered. Residues methionine 1–arginine 118 lie on the Cytoplasmic side of the membrane. Serine 6 and serine 18 each carry phosphoserine. A helical membrane pass occupies residues phenylalanine 119–leucine 139. Topologically, residues valine 140 to serine 204 are lumenal. Residue asparagine 184 is glycosylated (N-linked (GlcNAc...) asparagine). A helical membrane pass occupies residues isoleucine 205 to leucine 225. Over glutamine 226–asparagine 307 the chain is Cytoplasmic. The helical transmembrane segment at isoleucine 308–serine 328 threads the bilayer. At glutamine 329–asparagine 375 the chain is on the lumenal side. The tract at residues glutamate 366–serine 534 is TMC domain. The N-linked (GlcNAc...) asparagine glycan is linked to asparagine 375. The helical transmembrane segment at leucine 376–leucine 396 threads the bilayer. Topologically, residues glycine 397–glutamate 430 are cytoplasmic. Residues leucine 431–leucine 451 form a helical membrane-spanning segment. The Lumenal portion of the chain corresponds to proline 452–glycine 492. The chain crosses the membrane as a helical span at residues leucine 493–isoleucine 513. At lysine 514–phenylalanine 536 the chain is on the cytoplasmic side. Residues phenylalanine 537–isoleucine 557 traverse the membrane as a helical segment. The Lumenal portion of the chain corresponds to serine 558–leucine 598. An N-linked (GlcNAc...) asparagine glycan is attached at asparagine 571. A helical membrane pass occupies residues serine 599–isoleucine 619. Over serine 620–leucine 722 the chain is Cytoplasmic. 3 positions are modified to phosphoserine: serine 658, serine 663, and serine 673. The disordered stretch occupies residues serine 658–leucine 722. Residues phenylalanine 678 to arginine 687 show a composition bias toward pro residues. The segment covering proline 689–serine 712 has biased composition (low complexity). At serine 698 the chain carries Phosphoserine.

The protein belongs to the TMC family. As to quaternary structure, interacts with TMC6. Interacts and forms a complex with TMC6 and CIB1; the interaction stabilizes each component of the complex. Interacts and forms a complex with TMC6 and SLC30A1/ZNT1; the interaction regulates zinc transport into the ER. Interacts with TRADD; the interaction competes with TRADD/RIPK1/TRAF2/cIAPs complex I formation and facilites complex II formation. Expressed in thymus, lung, prostate, placenta, testis and spleen. Expressed in lymphocytes and peripheral lymphocytes.

The protein resides in the endoplasmic reticulum membrane. The protein localises to the golgi apparatus membrane. Its subcellular location is the nucleus membrane. Functionally, acts as a regulatory protein involved in the regulation of numerous cellular processes. Together with its homolog TMC6/EVER1, forms a complex with calcium-binding protein CIB1 in lymphocytes and keratynocytes where TMC6 and TMC8 stabilize CIB1 levels and reciprocally. Together with TMC6, also forms a complex with and activates zinc transporter ZNT1 at the ER membrane of keratynocytes, thereby facilitating zinc uptake into the ER. Also inhibits receptor-mediated calcium release from ER stores and calcium activated and volume regulated chloride channels. Down-regulates the activity of transcription factors induced by zinc and cytokines. Also sequesters TRADD which impairs the recruitment of TRAF2 and RIPK1 in the pro-survival complex I and promotes proapoptotic complex II formation, and may therefore be involved in TNF-induced cell death/survival decisions. This chain is Transmembrane channel-like protein 8, found in Mus musculus (Mouse).